Consider the following 358-residue polypeptide: Phenylalanine--tRNA ligase alpha subunit (358 aa).

Glu-258 is a binding site for Mg(2+).

The protein belongs to the class-II aminoacyl-tRNA synthetase family. Phe-tRNA synthetase alpha subunit type 1 subfamily. As to quaternary structure, tetramer of two alpha and two beta subunits. Mg(2+) serves as cofactor.

Its subcellular location is the cytoplasm. It carries out the reaction tRNA(Phe) + L-phenylalanine + ATP = L-phenylalanyl-tRNA(Phe) + AMP + diphosphate + H(+). This is Phenylalanine--tRNA ligase alpha subunit from Rhodospirillum rubrum (strain ATCC 11170 / ATH 1.1.1 / DSM 467 / LMG 4362 / NCIMB 8255 / S1).